The sequence spans 406 residues: Tryptophan synthase beta chain (406 aa).

Lys99 carries the post-translational modification N6-(pyridoxal phosphate)lysine.

It belongs to the TrpB family. As to quaternary structure, tetramer of two alpha and two beta chains. The cofactor is pyridoxal 5'-phosphate.

The enzyme catalyses (1S,2R)-1-C-(indol-3-yl)glycerol 3-phosphate + L-serine = D-glyceraldehyde 3-phosphate + L-tryptophan + H2O. It functions in the pathway amino-acid biosynthesis; L-tryptophan biosynthesis; L-tryptophan from chorismate: step 5/5. In terms of biological role, the beta subunit is responsible for the synthesis of L-tryptophan from indole and L-serine. The polypeptide is Tryptophan synthase beta chain (Brucella canis (strain ATCC 23365 / NCTC 10854 / RM-666)).